The following is a 963-amino-acid chain: Spliceosome associated factor 3, U4/U6 recycling protein (963 aa).

Residues 1–11 (MATAAETSASE) show a composition bias toward low complexity. Disordered regions lie at residues 1-36 (MATA…RTRR) and 50-90 (TMGP…YDEE). N-acetylalanine is present on alanine 2. Residues 2–351 (ATAAETSASE…LVPDLWIRYS (350 aa)) form a mediates interaction with PRPF3 region. Phosphoserine is present on residues serine 10 and serine 16. A compositionally biased stretch (basic and acidic residues) spans 14 to 23 (AESKAGPKAD). Positions 21 to 46 (KADGEEDEVKAARTRRKVLSRAVAAA) form a coiled coil. A compositionally biased stretch (acidic residues) spans 57–69 (QQEEGVSESDGDE). Residues 82-110 (EYEWEYDEEEEKNQLEIERLEEQLSINVY) are a coiled coil. HAT repeat units lie at residues 126–158 (GELT…DEIS), 164–195 (LDRE…YSVG), 201–237 (GGLE…FESA), 242–275 (ARLE…WSED), 324–356 (GDPA…YLDR), 359–391 (KVKD…AMER), 394–430 (VDHQ…YLRR), and 487–520 (NNMQ…LERA). Residue serine 215 is modified to Phosphoserine. The required for interaction with USP4 stretch occupies residues 487–520 (NNMQKARELWDSIMTRGNAKYANMWLEYYNLERA). Residues 537–953 (CTSDYPEHVC…AATEAPKMSN (417 aa)) are necessary and sufficient for U6 snRNA binding. A coiled-coil region spans residues 559–619 (LEDWDIAVQK…ALKKKKKIRG (61 aa)). Residues 590-601 (LVQQEEEKAEQR) show a composition bias toward basic and acidic residues. A disordered region spans residues 590 to 694 (LVQQEEEKAE…AASLKRDMPK (105 aa)). A required for nuclear localization region spans residues 600–670 (QRKRARAEKK…EVAAGPAGKC (71 aa)). Positions 601 to 608 (RKRARAEK) match the Nuclear localization signal motif. The span at 602–617 (KRARAEKKALKKKKKI) shows a compositional bias: basic residues. Positions 626–639 (DEDDEKEWGDDEEE) are enriched in acidic residues. Position 650 is a phosphoserine (serine 650). Residue threonine 657 is modified to Phosphothreonine. Residues 677–694 (PPSKQKEKAASLKRDMPK) are compositionally biased toward basic and acidic residues. One can recognise an RRM 1 domain in the interval 704-782 (ITVFVSNLPY…RPMFVSPCVD (79 aa)). Residues serine 769, serine 795, and serine 852 each carry the phosphoserine modification. An RRM 2 domain is found at 801-878 (HKLFISGLPF…NIIKVAISNP (78 aa)). The tract at residues 878 to 898 (PPQRKVPEKPETRKAPGGPML) is disordered. The segment covering 882–891 (KVPEKPETRK) has biased composition (basic and acidic residues). Arginine 906 carries the omega-N-methylarginine modification. Residues 920–948 (LQRPSAAAPQAENGPAAAPAVAAPAATEA) form a disordered region. The span at 925–948 (AAAPQAENGPAAAPAVAAPAATEA) shows a compositional bias: low complexity.

In terms of assembly, component of the 7SK snRNP complex at least composed of P-TEFb (composed of CDK9 and CCNT1/cyclin-T1), HEXIM1, HEXIM2, BCDIN3, SART3 proteins and 7SK and U6 snRNAs. Interacts with AGO1 and AGO2. Interacts with PRPF3 and USP4; the interaction with PRPF3 is direct and recruits USP4 to its substrate PRPF3. Interacts with USP15; the interaction is direct. Interacts with HIV-1 Tat. Ubiquitously expressed.

The protein resides in the nucleus. The protein localises to the nucleoplasm. It is found in the cajal body. It localises to the nucleus speckle. Its subcellular location is the cytoplasm. U6 snRNP-binding protein that functions as a recycling factor of the splicing machinery. Promotes the initial reassembly of U4 and U6 snRNPs following their ejection from the spliceosome during its maturation. Also binds U6atac snRNPs and may function as a recycling factor for U4atac/U6atac spliceosomal snRNP, an initial step in the assembly of U12-type spliceosomal complex. The U12-type spliceosomal complex plays a role in the splicing of introns with non-canonical splice sites. May also function as a substrate-targeting factor for deubiquitinases like USP4 and USP15. Recruits USP4 to ubiquitinated PRPF3 within the U4/U5/U6 tri-snRNP complex, promoting PRPF3 deubiquitination and thereby regulating the spliceosome U4/U5/U6 tri-snRNP spliceosomal complex disassembly. May also recruit the deubiquitinase USP15 to histone H2B and mediate histone deubiquitination, thereby regulating gene expression and/or DNA repair. May play a role in hematopoiesis probably through transcription regulation of specific genes including MYC. Functionally, regulates Tat transactivation activity through direct interaction. May be a cellular factor for HIV-1 gene expression and viral replication. This Homo sapiens (Human) protein is Spliceosome associated factor 3, U4/U6 recycling protein.